Consider the following 146-residue polypeptide: UPF0735 ACT domain-containing protein Cbei_1295 (146 aa).

In terms of domain architecture, ACT spans 70 to 145; sequence TYNIIFKNEK…NVEKVEFIGM (76 aa).

The protein belongs to the UPF0735 family.

The chain is UPF0735 ACT domain-containing protein Cbei_1295 from Clostridium beijerinckii (strain ATCC 51743 / NCIMB 8052) (Clostridium acetobutylicum).